A 500-amino-acid polypeptide reads, in one-letter code: Glycerol kinase (500 aa).

Threonine 11 provides a ligand contact to ADP. Residues threonine 11, threonine 12, and serine 13 each coordinate ATP. Sn-glycerol 3-phosphate is bound at residue threonine 11. Arginine 15 serves as a coordination point for ADP. Sn-glycerol 3-phosphate contacts are provided by arginine 81, glutamate 82, tyrosine 133, and aspartate 242. Arginine 81, glutamate 82, tyrosine 133, aspartate 242, and glutamine 243 together coordinate glycerol. ADP contacts are provided by threonine 264 and glycine 307. Threonine 264, glycine 307, glutamine 311, and glycine 411 together coordinate ATP. Glycine 411 serves as a coordination point for ADP.

The protein belongs to the FGGY kinase family.

The enzyme catalyses glycerol + ATP = sn-glycerol 3-phosphate + ADP + H(+). Its pathway is polyol metabolism; glycerol degradation via glycerol kinase pathway; sn-glycerol 3-phosphate from glycerol: step 1/1. Its activity is regulated as follows. Inhibited by fructose 1,6-bisphosphate (FBP). Functionally, key enzyme in the regulation of glycerol uptake and metabolism. Catalyzes the phosphorylation of glycerol to yield sn-glycerol 3-phosphate. This chain is Glycerol kinase, found in Rhodopseudomonas palustris (strain ATCC BAA-98 / CGA009).